A 432-amino-acid polypeptide reads, in one-letter code: C4-dicarboxylate transport protein (432 aa).

The next 8 membrane-spanning stretches (helical) occupy residues 8 to 28, 44 to 64, 78 to 98, 148 to 168, 188 to 208, 222 to 242, 307 to 327, and 355 to 375; these read ILYV…HYWP, LIKM…IAGM, LLYF…AAHL, GDIL…AVLG, IVHV…AFTI, LIGT…GTIA, IYMT…LTLM, and AATL…ILGI.

This sequence belongs to the dicarboxylate/amino acid:cation symporter (DAACS) (TC 2.A.23) family.

It localises to the cell inner membrane. In terms of biological role, responsible for the transport of dicarboxylates such as succinate, fumarate, and malate from the periplasm across the membrane. The polypeptide is C4-dicarboxylate transport protein (Cupriavidus necator (strain ATCC 17699 / DSM 428 / KCTC 22496 / NCIMB 10442 / H16 / Stanier 337) (Ralstonia eutropha)).